The chain runs to 555 residues: Probable beta-glucosidase btgE (555 aa).

Positions 1–18 (MRGAILATAAAFAGTAVA) are cleaved as a signal peptide. Disordered stretches follow at residues 92–114 (TSSAAPVETPSETPSPTPEVTLP) and 263–290 (TTSAASTTTAVPSSSTTTSSATSVPTGA). Low complexity predominate over residues 263–288 (TTSAASTTTAVPSSSTTTSSATSVPT). Glu392 (proton donor) is an active-site residue. The Nucleophile role is filled by Glu488.

Belongs to the glycosyl hydrolase 17 family.

It is found in the secreted. The protein localises to the cell wall. It catalyses the reaction Hydrolysis of terminal, non-reducing beta-D-glucosyl residues with release of beta-D-glucose.. It participates in glycan metabolism; cellulose degradation. In terms of biological role, beta-glucosidases are one of a number of cellulolytic enzymes involved in the degradation of cellulosic biomass. Catalyzes the last step releasing glucose from the inhibitory cellobiose. The protein is Probable beta-glucosidase btgE (btgE) of Emericella nidulans (strain FGSC A4 / ATCC 38163 / CBS 112.46 / NRRL 194 / M139) (Aspergillus nidulans).